The chain runs to 225 residues: Methylthioribulose-1-phosphate dehydratase (225 aa).

Zn(2+) is bound by residues H106 and H108.

The protein belongs to the aldolase class II family. MtnB subfamily. Zn(2+) is required as a cofactor.

The catalysed reaction is 5-(methylsulfanyl)-D-ribulose 1-phosphate = 5-methylsulfanyl-2,3-dioxopentyl phosphate + H2O. The protein operates within amino-acid biosynthesis; L-methionine biosynthesis via salvage pathway; L-methionine from S-methyl-5-thio-alpha-D-ribose 1-phosphate: step 2/6. Functionally, catalyzes the dehydration of methylthioribulose-1-phosphate (MTRu-1-P) into 2,3-diketo-5-methylthiopentyl-1-phosphate (DK-MTP-1-P). The polypeptide is Methylthioribulose-1-phosphate dehydratase (Xanthomonas oryzae pv. oryzae (strain KACC10331 / KXO85)).